Consider the following 94-residue polypeptide: Co-chaperonin GroES (94 aa).

Belongs to the GroES chaperonin family. As to quaternary structure, heptamer of 7 subunits arranged in a ring. Interacts with the chaperonin GroEL.

It localises to the cytoplasm. In terms of biological role, together with the chaperonin GroEL, plays an essential role in assisting protein folding. The GroEL-GroES system forms a nano-cage that allows encapsulation of the non-native substrate proteins and provides a physical environment optimized to promote and accelerate protein folding. GroES binds to the apical surface of the GroEL ring, thereby capping the opening of the GroEL channel. The sequence is that of Co-chaperonin GroES from Ruminiclostridium cellulolyticum (strain ATCC 35319 / DSM 5812 / JCM 6584 / H10) (Clostridium cellulolyticum).